We begin with the raw amino-acid sequence, 467 residues long: H(+)/Cl(-) exchange transporter ClcA (467 aa).

The Cytoplasmic segment spans residues 1 to 30 (MTKRERIVKSVLAHVPKDAINQFVSRGSTP). The helical transmembrane segment at 31-67 (FSVLIMAAIVGTLAGFVGTYFELAVHFVSETRTEWLR) threads the bilayer. At 68–74 (SEIGSVL) the chain is on the periplasmic side. The chain crosses the membrane as a helical span at residues 75–98 (PLWLAAVLISALLAFIGYFLVHRF). The short motif at 104-108 (GSGIP) is the Selectivity filter part_1 element. Serine 105 lines the chloride pocket. Residues 107–114 (IPEIEGAM) constitute an intramembrane region (helical). Topologically, residues 115-121 (DNIRPVR) are cytoplasmic. 2 helical membrane-spanning segments follow: residues 122–139 (WWRVLPVKFFGGMGALGS) and 146–164 (EGPTVQMGGAVGRMVTDIF). The Selectivity filter part_2 motif lies at 144-148 (GREGP). Over 165 to 174 (RVKDDDTRHS) the chain is Cytoplasmic. 2 intramembrane regions (helical) span residues 175–187 (LLASGAAGGLAAA) and 191–199 (PLAGIMFVV). Over 200-212 (EEMRPQFRYSLIS) the chain is Cytoplasmic. The chain crosses the membrane as a helical span at residues 213–230 (IRAVIISAIMANIVFRAI). Residues 231–250 (NGQDAVITMPQYQSPALQTL) are Periplasmic-facing. A helical membrane pass occupies residues 251–279 (WLFLLLGALFGVFGVIFNKLITVAQDSFV). Over 280 to 285 (AIHKND) the chain is Cytoplasmic. Residues 286–307 (RKRYLITGSILGGVFGLLLLYV) traverse the membrane as a helical segment. Topologically, residues 308–327 (PQLTGGGIALIPDVTTGNYS) are periplasmic. 2 consecutive transmembrane segments (helical) span residues 328–347 (ISILVLLFIGRVVTTLLCFG) and 353–374 (GIFAPMLALGTLFGYAFGASAD). The Selectivity filter part_3 signature appears at 353–357 (GIFAP). The chloride site is built by isoleucine 354 and phenylalanine 355. The Periplasmic portion of the chain corresponds to 375–384 (VLLPTLDIEP). The segment at residues 385-399 (GVFAIAGMGALFAAT) is an intramembrane region (helical). The note=Loop between two helices intramembrane region spans 400–402 (VRA). An intramembrane region (helical) is located at residues 403–414 (PITGILLVIEMT). The note=Loop between two helices intramembrane region spans 415-419 (NNYYL). The chain crosses the membrane as a helical span at residues 420–436 (ILPLIITCLGAVIVAQL). Residues 437-467 (LGGQPIYSQLLHRTLKNDKLRQQDLPENQAS) lie on the Cytoplasmic side of the membrane. Tyrosine 443 contributes to the chloride binding site.

The protein belongs to the chloride channel (TC 2.A.49) family. ClcA subfamily. In terms of assembly, homodimer.

Its subcellular location is the cell inner membrane. It catalyses the reaction 2 chloride(in) + H(+)(out) = 2 chloride(out) + H(+)(in). In terms of biological role, proton-coupled chloride transporter. Functions as antiport system and exchanges two chloride ions for 1 proton. Probably acts as an electrical shunt for an outwardly-directed proton pump that is linked to amino acid decarboxylation, as part of the extreme acid resistance (XAR) response. In Vibrio parahaemolyticus serotype O3:K6 (strain RIMD 2210633), this protein is H(+)/Cl(-) exchange transporter ClcA.